Here is a 530-residue protein sequence, read N- to C-terminus: Protein transport protein SEC9 (530 aa).

The segment at 1-274 (MGIKKMFQKK…QPANDYNLDL (274 aa)) is disordered. Residues 8–22 (QKKEPTEQEIREELS) are compositionally biased toward basic and acidic residues. 2 stretches are compositionally biased toward low complexity: residues 61 to 100 (NPYA…NNGG) and 122 to 141 (GSSP…SSNP). A compositionally biased stretch (polar residues) spans 142 to 160 (YGNNNGSRSSQNTSSPYAK). Residues 161-202 (STNNSSYSNSPYSGSTVNNGNRGGHSNNSNSSAGGNPYAAGG) show a composition bias toward low complexity. Polar residues-rich tracts occupy residues 203–228 (RSSQ…RQTQ) and 258–268 (RNQQSSQQPAN). T-SNARE coiled-coil homology domains lie at 313-375 (KFVK…VKEL) and 467-529 (DDME…LNNI).

The protein belongs to the SNAP-25 family.

Its subcellular location is the membrane. Late secretory t-SNARE protein required for secretion and proper cytokinesis. Plays an important role in the secretion of virulence-associated extracellular enzymes and vesicle-mediated polarized hyphal growth. This is Protein transport protein SEC9 (SEC9) from Candida albicans (strain SC5314 / ATCC MYA-2876) (Yeast).